We begin with the raw amino-acid sequence, 278 residues long: 1-acyl-sn-glycerol-3-phosphate acyltransferase beta (278 aa).

Residues 1 to 23 (MDPWPWLTAALLLLLLLVQLSRT) form the signal peptide. Topologically, residues 24-29 (ARFYAK) are lumenal. Residues 30–50 (VGLYCVLCLSFSAAASIVCLL) form a helical membrane-spanning segment. Over 51-121 (RHGGRTVDNM…PKRCVQIAKR (71 aa)) the chain is Cytoplasmic. Residues 98–103 (HQSILD) carry the HXXXXD motif motif. A helical transmembrane segment spans residues 122–142 (ELMFTGPVGLIMYLGGVYFIN). The Lumenal portion of the chain corresponds to 143–278 (RQQARTAMSV…IKEPGVLPAQ (136 aa)). The short motif at 172 to 175 (EGTR) is the EGTR motif element.

The protein belongs to the 1-acyl-sn-glycerol-3-phosphate acyltransferase family. As to expression, expressed at high levels in the liver, at intermediate levels in the kidney, gut, heart and skeletal muscles. Undetectable in brain and spleen.

Its subcellular location is the endoplasmic reticulum membrane. The enzyme catalyses a 1-acyl-sn-glycero-3-phosphate + an acyl-CoA = a 1,2-diacyl-sn-glycero-3-phosphate + CoA. It catalyses the reaction 1-(9Z-octadecenoyl)-sn-glycero-3-phosphate + (9Z)-octadecenoyl-CoA = 1,2-di-(9Z-octadecenoyl)-sn-glycero-3-phosphate + CoA. It carries out the reaction 1-(9Z-octadecenoyl)-sn-glycero-3-phosphate + hexadecanoyl-CoA = 1-(9Z)-octadecenoyl-2-hexadecanoyl-sn-glycero-3-phosphate + CoA. The catalysed reaction is heptadecanoyl-CoA + 1-(9Z-octadecenoyl)-sn-glycero-3-phosphate = 1-(9Z)-octadecenoyl-2-heptadecanoyl-sn-glycero-3-phosphate + CoA. The enzyme catalyses 1-(9Z-octadecenoyl)-sn-glycero-3-phosphate + (9Z,12Z)-octadecadienoyl-CoA = 1-(9Z)-octadecenoyl-2-(9Z,12Z)-octadecadienoyl-sn-glycero-3-phosphate + CoA. It catalyses the reaction 1-(9Z-octadecenoyl)-sn-glycero-3-phosphate + tetradecanoyl-CoA = 1-(9Z)-octadecenoyl-2-tetradecanoyl-sn-glycero-3-phosphate + CoA. It carries out the reaction pentadecanoyl-CoA + 1-(9Z-octadecenoyl)-sn-glycero-3-phosphate = 1-(9Z)-octadecenoyl-2-pentadecanoyl-sn-glycero-3-phosphate + CoA. The catalysed reaction is 1-hexadecanoyl-sn-glycero-3-phosphate + (9Z)-octadecenoyl-CoA = 1-hexadecanoyl-2-(9Z-octadecenoyl)-sn-glycero-3-phosphate + CoA. The enzyme catalyses 1-tetradecanoyl-sn-glycerol 3-phosphate + (9Z)-octadecenoyl-CoA = 1-tetradecanoyl-2-(9Z)-octadecenoyl-sn-glycero-3-phosphate + CoA. It catalyses the reaction 1-(9Z,12Z,15Z)-octadecatrienoyl-sn-glycero-3-phosphate + (9Z)-octadecenoyl-CoA = 1-(9Z,12Z,15Z)-octadecatrienoyl-2-(9Z)-octadecenoyl-sn-glycero-3-phosphate + CoA. It carries out the reaction 1-(6Z,9Z,12Z-octadecatrienoyl)-sn-glycero-3-phosphate + (9Z)-octadecenoyl-CoA = (6Z,9Z,12Z)-octadecatrienoyl-2-(9Z)-octadecenoyl-sn-glycero-3-phosphate + CoA. The catalysed reaction is 1-eicosanoyl-sn-glycero-3-phosphate + (9Z)-octadecenoyl-CoA = 1-eicosanoyl-2-(9Z)-octadecenoyl-sn-glycero-3-phosphate + CoA. The enzyme catalyses 1-hexadecanoyl-sn-glycero-3-phosphate + octadecanoyl-CoA = 1-hexadecanoyl-2-octadecanoyl-sn-glycero-3-phosphate + CoA. It catalyses the reaction 1-hexadecanoyl-sn-glycero-3-phosphate + (5Z,8Z,11Z,14Z)-eicosatetraenoyl-CoA = 1-hexadecanoyl-2-(5Z,8Z,11Z,14Z-eicosatetraenoyl)-sn-glycero-3-phosphate + CoA. It carries out the reaction 1-hexadecanoyl-sn-glycero-3-phosphate + hexadecanoyl-CoA = 1,2-dihexadecanoyl-sn-glycero-3-phosphate + CoA. The catalysed reaction is 1-hexadecanoyl-sn-glycero-3-phosphate + tetradecanoyl-CoA = 1-hexadecanoyl-2-tetradecanoyl-sn-glycero-3-phosphate + CoA. The enzyme catalyses (11Z)-octadecenoyl-CoA + 1-(9Z-octadecenoyl)-sn-glycero-3-phosphate = 1-(9Z)-octadecenoyl-2-(11Z)-octadecenoyl-sn-glycero-3-phosphate + CoA. Its pathway is phospholipid metabolism; CDP-diacylglycerol biosynthesis; CDP-diacylglycerol from sn-glycerol 3-phosphate: step 2/3. Functionally, converts 1-acyl-sn-glycerol-3-phosphate (lysophosphatidic acid or LPA) into 1,2-diacyl-sn-glycerol-3-phosphate (phosphatidic acid or PA) by incorporating an acyl moiety at the sn-2 position of the glycerol backbone. The chain is 1-acyl-sn-glycerol-3-phosphate acyltransferase beta (Agpat2) from Mus musculus (Mouse).